We begin with the raw amino-acid sequence, 112 residues long: Putative pterin-4-alpha-carbinolamine dehydratase (112 aa).

Belongs to the pterin-4-alpha-carbinolamine dehydratase family.

It catalyses the reaction (4aS,6R)-4a-hydroxy-L-erythro-5,6,7,8-tetrahydrobiopterin = (6R)-L-erythro-6,7-dihydrobiopterin + H2O. The protein is Putative pterin-4-alpha-carbinolamine dehydratase of Vibrio campbellii (strain ATCC BAA-1116).